The chain runs to 357 residues: Protein pelota homolog (357 aa).

The protein belongs to the eukaryotic release factor 1 family. Pelota subfamily. Monomer. Requires a divalent metal cation as cofactor.

Its subcellular location is the cytoplasm. Its function is as follows. May function in recognizing stalled ribosomes, interact with stem-loop structures in stalled mRNA molecules, and effect endonucleolytic cleavage of the mRNA. May play a role in the release non-functional ribosomes and degradation of damaged mRNAs. Has endoribonuclease activity. The polypeptide is Protein pelota homolog (Methanocella arvoryzae (strain DSM 22066 / NBRC 105507 / MRE50)).